The sequence spans 280 residues: UDP-3-O-acyl-N-acetylglucosamine deacetylase (280 aa).

The Zn(2+) site is built by H79, H237, and D241. Residue H264 is the Proton donor of the active site.

It belongs to the LpxC family. It depends on Zn(2+) as a cofactor.

It carries out the reaction a UDP-3-O-[(3R)-3-hydroxyacyl]-N-acetyl-alpha-D-glucosamine + H2O = a UDP-3-O-[(3R)-3-hydroxyacyl]-alpha-D-glucosamine + acetate. The protein operates within glycolipid biosynthesis; lipid IV(A) biosynthesis; lipid IV(A) from (3R)-3-hydroxytetradecanoyl-[acyl-carrier-protein] and UDP-N-acetyl-alpha-D-glucosamine: step 2/6. Catalyzes the hydrolysis of UDP-3-O-myristoyl-N-acetylglucosamine to form UDP-3-O-myristoylglucosamine and acetate, the committed step in lipid A biosynthesis. This Chlamydia felis (strain Fe/C-56) (Chlamydophila felis) protein is UDP-3-O-acyl-N-acetylglucosamine deacetylase.